Reading from the N-terminus, the 435-residue chain is Protein deadpan (435 aa).

Low complexity predominate over residues 18–27; the sequence is GYSDSYGSNG. The disordered stretch occupies residues 18–48; the sequence is GYSDSYGSNGRMSNPNGLSKAELRKTNKPIM. The region spanning 40-97 is the bHLH domain; sequence LRKTNKPIMEKRRRARINHCLNELKSLILEAMKKDPARHTKLEKADILEMTVKHLQSV. One can recognise an Orange domain in the interval 116-149; that stretch reads FKTGFVECAEEVNRYVSQMDGIDTGVRQRLSAHL. 2 disordered regions span residues 305 to 334 and 349 to 416; these read QLPV…AASP and STPP…DEPS. The segment covering 311–324 has biased composition (low complexity); it reads STSPPLSPISSISS. 2 stretches are compositionally biased toward polar residues: residues 355–378 and 385–395; these read SAET…SSGC and LQQQQVSSTSG. Phosphoserine occurs at positions 407, 408, and 411. The WRPW motif motif lies at 432-435; the sequence is WRPW.

As to quaternary structure, homodimer. Heterodimer with E(spl)mgamma-HLH and E(spl). Transcription repression requires formation of a complex with the corepressor protein Groucho. Interacts (via bHLH motif) with sisA. Interacts with da.

It localises to the nucleus. Its function is as follows. Transcriptional repressor of genes that require a bHLH protein for their transcription. In the larval brain, required to maintain the self-renewal and identity of type II neuroblasts by regulating the expression of the transcriptional repressor erm together with other self-renewal transcriptional repressors such as klu and E(spl)mgamma-HLH. As part of its role in neuroblasts development, has been shown to be a direct target of the Notch signaling pathway, however might work also independently of N/Notch. In the developing larval and pupal brain, required for mushroom body differentiation. Involved in sex determination and SXL transcription repression when in complex with the corepressor protein Groucho. The sequence is that of Protein deadpan (dpn) from Drosophila melanogaster (Fruit fly).